The sequence spans 169 residues: MVNRVKRRVSCFPKATYYKPREIPLCCLETANLSIEEIEAIRLCDLLQMEQNEAADRMGISRKTFWSDLQRARQKVADALVNGKAIEISGGEYVNTGECRIHFLCKECDHVWEAKFDQSRPTSCPNCGSNLIFRLGGDGKGKRFIENDYCCPKEKESSRSTDEGSKKKR.

It belongs to the UPF0251 family.

The sequence is that of UPF0251 protein MM_2090 from Methanosarcina mazei (strain ATCC BAA-159 / DSM 3647 / Goe1 / Go1 / JCM 11833 / OCM 88) (Methanosarcina frisia).